The chain runs to 468 residues: Argininosuccinate lyase (468 aa).

The protein belongs to the lyase 1 family. Argininosuccinate lyase subfamily.

It is found in the cytoplasm. It carries out the reaction 2-(N(omega)-L-arginino)succinate = fumarate + L-arginine. It participates in amino-acid biosynthesis; L-arginine biosynthesis; L-arginine from L-ornithine and carbamoyl phosphate: step 3/3. The chain is Argininosuccinate lyase from Zymomonas mobilis subsp. mobilis (strain ATCC 31821 / ZM4 / CP4).